The primary structure comprises 364 residues: Peptide chain release factor 1 (364 aa).

The residue at position 238 (glutamine 238) is an N5-methylglutamine. Residues 286–297 (DEKRQAEEDSTR) show a composition bias toward basic and acidic residues. Positions 286–315 (DEKRQAEEDSTRRNLVGSGDRSERIRTYNY) are disordered.

Belongs to the prokaryotic/mitochondrial release factor family. Post-translationally, methylated by PrmC. Methylation increases the termination efficiency of RF1.

Its subcellular location is the cytoplasm. Its function is as follows. Peptide chain release factor 1 directs the termination of translation in response to the peptide chain termination codons UAG and UAA. The sequence is that of Peptide chain release factor 1 from Idiomarina loihiensis (strain ATCC BAA-735 / DSM 15497 / L2-TR).